We begin with the raw amino-acid sequence, 377 residues long: Lactosylceramide 1,3-N-acetyl-beta-D-glucosaminyltransferase (377 aa).

Residues 1–14 (MRVFVSSRRVKRWQ) lie on the Cytoplasmic side of the membrane. A helical; Signal-anchor for type II membrane protein transmembrane segment spans residues 15-35 (FFHLFAICFILSFMVFWGPIN). At 36-377 (NYIMSHMKSY…NSYPCRAAFA (342 aa)) the chain is on the lumenal side. N-linked (GlcNAc...) asparagine glycosylation occurs at N58.

This sequence belongs to the glycosyltransferase 31 family.

It localises to the golgi apparatus membrane. The catalysed reaction is a beta-D-Gal-(1-&gt;4)-beta-D-Glc-(1&lt;-&gt;1)-Cer(d18:1(4E)) + UDP-N-acetyl-alpha-D-glucosamine = a beta-D-GlcNAc-(1-&gt;3)-beta-D-Gal-(1-&gt;4)-beta-D-Glc-(1&lt;-&gt;1)-Cer(d18:1(4E)) + UDP + H(+). The enzyme catalyses a neolactoside nLc4Cer(d18:1(4E)) + UDP-N-acetyl-alpha-D-glucosamine = a neolactoside IV(3)-beta-GlcNAc-nLc4Cer(d18:1(4E)) + UDP + H(+). It participates in protein modification; protein glycosylation. In terms of biological role, beta-1,3-N-acetylglucosaminyltransferase that plays a key role in the synthesis of lacto- or neolacto-series carbohydrate chains on glycolipids, notably by participating in biosynthesis of HNK-1 and Lewis X carbohydrate structures. Has strong activity toward lactosylceramide (LacCer) and neolactotetraosylceramide (nLc(4)Cer; paragloboside), resulting in the synthesis of Lc(3)Cer and neolactopentaosylceramide (nLc(5)Cer), respectively. Probably plays a central role in regulating neolacto-series glycolipid synthesis during embryonic development. The chain is Lactosylceramide 1,3-N-acetyl-beta-D-glucosaminyltransferase from Rattus norvegicus (Rat).